The chain runs to 302 residues: Zinc transporter ZIP1 (302 aa).

At 1 to 6 (MEYLLQ) the chain is on the extracellular side. The chain crosses the membrane as a helical span at residues 7–27 (VKIAALVGLLFLTLIFGFIPA). The Cytoplasmic portion of the chain corresponds to 28 to 44 (RVKWFRDTDGTETHRTV). The helical transmembrane segment at 45–65 (LSLISCFAGGVFLSACFLDII) threads the bilayer. Topologically, residues 66–80 (PDYLSDINTELHARQ) are extracellular. The chain crosses the membrane as a helical span at residues 81 to 101 (LETSFPLPEFIMAAGFFTVLI). Residues 102 to 158 (LERIVLNCKEMRATHEERTTLIPERKSGHGHGHGDGPDPESSGHHVHVDFQAHSPFR) are Cytoplasmic-facing. The segment at 123–145 (IPERKSGHGHGHGDGPDPESSGH) is disordered. A helical membrane pass occupies residues 159 to 179 (SFMLFLSLSLHSIFEGLAIGL). Residues 180 to 185 (QTTDPK) lie on the Extracellular side of the membrane. The helical transmembrane segment at 186 to 206 (VVEICIAILVHKSIIVFSLAV) threads the bilayer. Residues 207–216 (KLVQSAIPPL) lie on the Cytoplasmic side of the membrane. A helical membrane pass occupies residues 217–237 (WVAAYIGVFALMSPVGIAIGI). Topologically, residues 238 to 251 (SVMEAQLAAGPLIQ) are extracellular. The chain crosses the membrane as a helical span at residues 252–272 (AILEGFAAGTFVYITFLEILP). Over 273–281 (HELNSPGKQ) the chain is Cytoplasmic. A helical transmembrane segment spans residues 282-302 (LLKVLFLLLGFSIMAALSFLG).

The protein belongs to the ZIP transporter (TC 2.A.5) family. Highest levels in ovary, lower levels in intestine and gill, barely detected in kidney.

It localises to the cell membrane. Its subcellular location is the endoplasmic reticulum membrane. The enzyme catalyses Zn(2+)(in) = Zn(2+)(out). Its function is as follows. Transporter for the divalent cation Zn(2+). Mediates the influx of Zn(2+) into cells from extracellular space. This Takifugu rubripes (Japanese pufferfish) protein is Zinc transporter ZIP1 (slc39a1).